A 184-amino-acid polypeptide reads, in one-letter code: NADH-quinone oxidoreductase subunit B (184 aa).

[4Fe-4S] cluster-binding residues include cysteine 37, cysteine 38, cysteine 103, and cysteine 132.

This sequence belongs to the complex I 20 kDa subunit family. In terms of assembly, NDH-1 is composed of 14 different subunits. Subunits NuoB, C, D, E, F, and G constitute the peripheral sector of the complex. [4Fe-4S] cluster is required as a cofactor.

Its subcellular location is the cell membrane. It catalyses the reaction a quinone + NADH + 5 H(+)(in) = a quinol + NAD(+) + 4 H(+)(out). Functionally, NDH-1 shuttles electrons from NADH, via FMN and iron-sulfur (Fe-S) centers, to quinones in the respiratory chain. The immediate electron acceptor for the enzyme in this species is believed to be a menaquinone. Couples the redox reaction to proton translocation (for every two electrons transferred, four hydrogen ions are translocated across the cytoplasmic membrane), and thus conserves the redox energy in a proton gradient. This Beutenbergia cavernae (strain ATCC BAA-8 / DSM 12333 / CCUG 43141 / JCM 11478 / NBRC 16432 / NCIMB 13614 / HKI 0122) protein is NADH-quinone oxidoreductase subunit B.